A 706-amino-acid polypeptide reads, in one-letter code: Semenogelin-2 (706 aa).

The N-terminal stretch at 1 to 23 (MKSIILFVLSLLLILEKQAAVMG) is a signal peptide. Disordered stretches follow at residues 25–62 (KGGSKGQLSSGSSRFPHRHRSQHYSGQKDKQHTESKGS), 131–156 (KGGQVHHGTQNPSQDQGNSPSGKGIF), and 276–678 (NLNQ…SGAH). Positions 50 to 59 (GQKDKQHTES) are enriched in basic and acidic residues. A compositionally biased stretch (polar residues) spans 137–151 (HGTQNPSQDQGNSPS). Over residues 297–308 (TEERQPNHEENS) the composition is skewed to basic and acidic residues. The segment covering 329–339 (KSQNQVTIPSQ) has biased composition (polar residues). Residues 340–349 (DQEHGHKENK) are compositionally biased toward basic and acidic residues. Positions 389-399 (KSQNQVTIPSQ) are enriched in polar residues. The span at 400–409 (DQEHGHKENK) shows a compositional bias: basic and acidic residues. Polar residues predominate over residues 449–459 (KSQNQVTIPSQ). Residues 460–469 (DQEHGHKENK) are compositionally biased toward basic and acidic residues. Residues 509-519 (KSQNQVAIPSQ) are compositionally biased toward polar residues. A compositionally biased stretch (basic and acidic residues) spans 520–529 (DQEHGHKENK). The span at 569–579 (KSQNQVTIPSQ) shows a compositional bias: polar residues. The span at 580-589 (DQEHGHKENK) shows a compositional bias: basic and acidic residues. 2 stretches are compositionally biased toward polar residues: residues 611 to 622 (KDVSQSSLSFQT) and 630 to 653 (SQIQTPNPNQGQWSGQNAKGNSGK). The segment covering 654 to 670 (SADREQDLLSHEQEGRY) has biased composition (basic and acidic residues).

Belongs to the semenogelin family. As to quaternary structure, interacts with SERPINA5.

It is found in the secreted. Its function is as follows. Participates in the formation of a gel matrix (sperm coagulum) entrapping the accessory gland secretions and ejaculated spermatozoa. The chain is Semenogelin-2 (SEMG2) from Macaca mulatta (Rhesus macaque).